The chain runs to 336 residues: MRRIGAFGGSTALWALLAAHVAGAFEPVSVGIAIGAVSALTGYLSYTDFYCRFTECCHEERPLNTSALKLDLEEKLFGQHLATEVILKALTGFRNNKNSKKPLTLSLHGWAGTGKNFISQIVAENLYPKGLKSNFVHLFVSTLHFPHEQKIKVYQDQLQKWIRGNVSACGSSVFIFDEMDKLHPGIIDAIKPFLDYYEQVDGISYRRAIFIFLSNAGGDLITKTALDFWRAGRKREEIQLKDLEPVLSVGVFNNKHSGLWHSGLIDKNLIDYFIPFLPLEYKHVKMCVRAEMRARGAAVDEDVVTSVADEMTFFPKDEKIYSDKGCKTVQSRLDFH.

The N-terminal stretch at 1–24 (MRRIGAFGGSTALWALLAAHVAGA) is a signal peptide. Asparagine 64 carries N-linked (GlcNAc...) asparagine glycosylation. 109-116 (GWAGTGKN) serves as a coordination point for ATP. Residue asparagine 165 is glycosylated (N-linked (GlcNAc...) asparagine).

This sequence belongs to the ClpA/ClpB family. Torsin subfamily. As to quaternary structure, homohexamer. Interacts with TOR1A; the interaction may be specific of neural tissues. Interacts with TOR1AIP1; TOR1AIP1 is required for TOR1B location on the nuclear membrane. Interacts (ATP-bound) with TOR1AIP2; important for endoplasmic reticulum integrity. In terms of processing, N-glycosylated. Highly expressed in liver and muscle; lower expression levels are observed in brain (at protein level).

The protein localises to the endoplasmic reticulum lumen. The protein resides in the nucleus membrane. It catalyses the reaction ATP + H2O = ADP + phosphate + H(+). May serve as a molecular chaperone assisting in the proper folding of secreted and/or membrane proteins. Plays a role in non-neural cells nuclear envelope and endoplasmic reticulum integrity. May have a redundant function with TOR1A in non-neural tissues. The protein is Torsin-1B (Tor1b) of Mus musculus (Mouse).